The chain runs to 76 residues: ATP synthase subunit 9, mitochondrial (76 aa).

Helical transmembrane passes span 13-35 (GISTIGLLGAGIGIAIVFAALIQ) and 50-72 (FAILGFAISEATGLFCLMISFLL).

It belongs to the ATPase C chain family. As to quaternary structure, F-type ATPases have 2 components, CF(1) - the catalytic core - and CF(0) - the membrane proton channel. In yeast, the dimeric form of ATP synthase consists of 18 polypeptides: alpha, beta, gamma, delta, epsilon, 4 (B), 5 (OSCP), 6 (A), 8, 9 (C), d, E (Tim11), f, g, h, i, j and k.

It localises to the mitochondrion membrane. Mitochondrial membrane ATP synthase (F(1)F(0) ATP synthase or Complex V) produces ATP from ADP in the presence of a proton gradient across the membrane which is generated by electron transport complexes of the respiratory chain. F-type ATPases consist of two structural domains, F(1) - containing the extramembraneous catalytic core and F(0) - containing the membrane proton channel, linked together by a central stalk and a peripheral stalk. During catalysis, ATP synthesis in the catalytic domain of F(1) is coupled via a rotary mechanism of the central stalk subunits to proton translocation. Part of the complex F(0) domain. A homomeric c-ring of probably 10 subunits is part of the complex rotary element. This is ATP synthase subunit 9, mitochondrial (ATP9) from Eremothecium gossypii (strain ATCC 10895 / CBS 109.51 / FGSC 9923 / NRRL Y-1056) (Yeast).